A 258-amino-acid polypeptide reads, in one-letter code: Methionine aminopeptidase (258 aa).

His84 lines the substrate pocket. A divalent metal cation-binding residues include Asp102, Asp113, and His176. Substrate is bound at residue His183. Glu211 and Glu242 together coordinate a divalent metal cation.

This sequence belongs to the peptidase M24A family. Methionine aminopeptidase type 1 subfamily. As to quaternary structure, monomer. Co(2+) serves as cofactor. It depends on Zn(2+) as a cofactor. Mn(2+) is required as a cofactor. The cofactor is Fe(2+).

It catalyses the reaction Release of N-terminal amino acids, preferentially methionine, from peptides and arylamides.. In terms of biological role, removes the N-terminal methionine from nascent proteins. The N-terminal methionine is often cleaved when the second residue in the primary sequence is small and uncharged (Met-Ala-, Cys, Gly, Pro, Ser, Thr, or Val). Requires deformylation of the N(alpha)-formylated initiator methionine before it can be hydrolyzed. In Aquifex aeolicus (strain VF5), this protein is Methionine aminopeptidase.